The sequence spans 604 residues: Linalool synthase Tps-5042L13, chloroplastic (604 aa).

Residues 1-34 (MSSMRIYVAIMKKPSVKHVDNVDKKASKPSWRVS) constitute a chloroplast transit peptide. (2E)-geranyl diphosphate contacts are provided by Arg-323, Asp-360, Asp-364, Arg-501, and Asp-504. Positions 360 and 364 each coordinate Mg(2+). Residues 360–364 (DDVYD) carry the DDXXD motif motif. Mg(2+)-binding residues include Asp-504, Thr-508, and Glu-512.

Belongs to the terpene synthase family. Tpsb subfamily. Monomer. Mg(2+) is required as a cofactor. Mn(2+) serves as cofactor.

It localises to the plastid. It is found in the chloroplast. It catalyses the reaction (2E)-geranyl diphosphate + H2O = linalool + diphosphate. It participates in secondary metabolite biosynthesis; terpenoid biosynthesis. In terms of biological role, monoterpene synthase (mono-TPS) involved in the biosynthesis of monoterpenes natural products. Catalyzes the conversion of (2E)-geranyl diphosphate (GPP) into linalool. This is Linalool synthase Tps-5042L13, chloroplastic from Perilla frutescens (Beefsteak mint).